The sequence spans 177 residues: Ureidoglycolate lyase (177 aa).

This sequence belongs to the ureidoglycolate lyase family. As to quaternary structure, homodimer. The cofactor is Ni(2+).

It catalyses the reaction (S)-ureidoglycolate = urea + glyoxylate. It functions in the pathway nitrogen metabolism; (S)-allantoin degradation. Functionally, catalyzes the catabolism of the allantoin degradation intermediate (S)-ureidoglycolate, generating urea and glyoxylate. Involved in the utilization of allantoin as nitrogen source. The sequence is that of Ureidoglycolate lyase from Burkholderia cepacia (Pseudomonas cepacia).